Reading from the N-terminus, the 231-residue chain is Nuclear transcription factor Y subunit C-9 (231 aa).

A disordered region spans residues 211 to 231 (NPYMGQPMWQQQAPDQPDQEN).

It belongs to the NFYC/HAP5 subunit family. In terms of assembly, heterotrimeric transcription factor composed of three components, NF-YA, NF-YB and NF-YC. Interacts with NFYA2, NFYB2, CO and RGA. Interacts with REF6 (via N-terminus). As to expression, ubiquitous. Present in etiolated seedlings.

It localises to the nucleus. Stimulates the transcription of various genes by recognizing and binding to a CCAAT motif in promoters. Interacts with REF6 to directly regulate SOC1 transcription in response to flowering signals from photoperiod and gibberellic acid pathways. The sequence is that of Nuclear transcription factor Y subunit C-9 (NFYC9) from Arabidopsis thaliana (Mouse-ear cress).